The primary structure comprises 475 residues: LEC14B homolog (475 aa).

The disordered stretch occupies residues 1–34 (MSYRTRFGKDNSACDSGNAVEGSGSSKGPNEVSN). Polar residues predominate over residues 23–33 (SGSSKGPNEVS). WD repeat units lie at residues 211–240 (DEFG…YVYD), 252–283 (AHSS…KVWD), 299–329 (GHLE…QLWD), 375–411 (GHGV…YIYD), and 423–453 (HHEG…ARWE).

Belongs to the WD repeat LEC14B family.

The sequence is that of LEC14B homolog from Prunus armeniaca (Apricot).